A 505-amino-acid polypeptide reads, in one-letter code: GMP synthase [glutamine-hydrolyzing] (505 aa).

The Glutamine amidotransferase type-1 domain occupies 2 to 190 (SVVILDFGSQ…FLEICGVARD (189 aa)). The active-site Nucleophile is the C79. Active-site residues include H165 and E167. In terms of domain architecture, GMPS ATP-PPase spans 191-380 (WNAEHIVDEL…LGLPDAIRMR (190 aa)). Residue 218 to 224 (SGGVDSS) participates in ATP binding.

Homodimer.

It catalyses the reaction XMP + L-glutamine + ATP + H2O = GMP + L-glutamate + AMP + diphosphate + 2 H(+). It participates in purine metabolism; GMP biosynthesis; GMP from XMP (L-Gln route): step 1/1. Its function is as follows. Catalyzes the synthesis of GMP from XMP. The sequence is that of GMP synthase [glutamine-hydrolyzing] from Deinococcus geothermalis (strain DSM 11300 / CIP 105573 / AG-3a).